We begin with the raw amino-acid sequence, 304 residues long: Pyridoxal 5'-phosphate synthase subunit PdxS (304 aa).

D-ribose 5-phosphate is bound at residue Asp-34. Lys-91 serves as the catalytic Schiff-base intermediate with D-ribose 5-phosphate. Gly-163 contacts D-ribose 5-phosphate. Arg-175 is a D-glyceraldehyde 3-phosphate binding site. D-ribose 5-phosphate is bound by residues Gly-224 and 245–246 (GS).

This sequence belongs to the PdxS/SNZ family. In the presence of PdxT, forms a dodecamer of heterodimers.

The enzyme catalyses aldehydo-D-ribose 5-phosphate + D-glyceraldehyde 3-phosphate + L-glutamine = pyridoxal 5'-phosphate + L-glutamate + phosphate + 3 H2O + H(+). It functions in the pathway cofactor biosynthesis; pyridoxal 5'-phosphate biosynthesis. Catalyzes the formation of pyridoxal 5'-phosphate from ribose 5-phosphate (RBP), glyceraldehyde 3-phosphate (G3P) and ammonia. The ammonia is provided by the PdxT subunit. Can also use ribulose 5-phosphate and dihydroxyacetone phosphate as substrates, resulting from enzyme-catalyzed isomerization of RBP and G3P, respectively. In Cutibacterium acnes (strain DSM 16379 / KPA171202) (Propionibacterium acnes), this protein is Pyridoxal 5'-phosphate synthase subunit PdxS.